Reading from the N-terminus, the 144-residue chain is Large ribosomal subunit protein uL13 (144 aa).

This sequence belongs to the universal ribosomal protein uL13 family. As to quaternary structure, part of the 50S ribosomal subunit.

In terms of biological role, this protein is one of the early assembly proteins of the 50S ribosomal subunit, although it is not seen to bind rRNA by itself. It is important during the early stages of 50S assembly. This is Large ribosomal subunit protein uL13 from Clostridium perfringens (strain 13 / Type A).